Here is a 770-residue protein sequence, read N- to C-terminus: 3-isopropylmalate dehydratase (770 aa).

The [4Fe-4S] cluster site is built by Cys354, Cys415, and Cys418.

This sequence belongs to the aconitase/IPM isomerase family. In terms of assembly, monomer. [4Fe-4S] cluster serves as cofactor.

The enzyme catalyses (2R,3S)-3-isopropylmalate = (2S)-2-isopropylmalate. Its pathway is amino-acid biosynthesis; L-leucine biosynthesis; L-leucine from 3-methyl-2-oxobutanoate: step 2/4. Functionally, catalyzes the isomerization between 2-isopropylmalate and 3-isopropylmalate, via the formation of 2-isopropylmaleate. The sequence is that of 3-isopropylmalate dehydratase (LEU1) from Candida maltosa (Yeast).